Reading from the N-terminus, the 54-residue chain is ATP synthase F(0) complex subunit 8 (54 aa).

A helical membrane pass occupies residues 4 to 24 (LNPGPWFAILVFSWLIFLTII). The tract at residues 35–54 (NEPTPVSAEKHKTESWDWPW) is disordered. Over residues 42–54 (AEKHKTESWDWPW) the composition is skewed to basic and acidic residues.

Belongs to the ATPase protein 8 family. In terms of assembly, component of the ATP synthase complex composed at least of ATP5F1A/subunit alpha, ATP5F1B/subunit beta, ATP5MC1/subunit c (homooctomer), MT-ATP6/subunit a, MT-ATP8/subunit 8, ATP5ME/subunit e, ATP5MF/subunit f, ATP5MG/subunit g, ATP5MK/subunit k, ATP5MJ/subunit j, ATP5F1C/subunit gamma, ATP5F1D/subunit delta, ATP5F1E/subunit epsilon, ATP5PF/subunit F6, ATP5PB/subunit b, ATP5PD/subunit d, ATP5PO/subunit OSCP. ATP synthase complex consists of a soluble F(1) head domain (subunits alpha(3) and beta(3)) - the catalytic core - and a membrane F(0) domain - the membrane proton channel (subunits c, a, 8, e, f, g, k and j). These two domains are linked by a central stalk (subunits gamma, delta, and epsilon) rotating inside the F1 region and a stationary peripheral stalk (subunits F6, b, d, and OSCP).

The protein resides in the mitochondrion membrane. Its function is as follows. Subunit 8, of the mitochondrial membrane ATP synthase complex (F(1)F(0) ATP synthase or Complex V) that produces ATP from ADP in the presence of a proton gradient across the membrane which is generated by electron transport complexes of the respiratory chain. ATP synthase complex consist of a soluble F(1) head domain - the catalytic core - and a membrane F(1) domain - the membrane proton channel. These two domains are linked by a central stalk rotating inside the F(1) region and a stationary peripheral stalk. During catalysis, ATP synthesis in the catalytic domain of F(1) is coupled via a rotary mechanism of the central stalk subunits to proton translocation. In vivo, can only synthesize ATP although its ATP hydrolase activity can be activated artificially in vitro. Part of the complex F(0) domain. The sequence is that of ATP synthase F(0) complex subunit 8 from Cyprinus carpio (Common carp).